The primary structure comprises 143 residues: Heat shock protein Hsp-16.48/Hsp-16.49 (143 aa).

Residues 35–140 (HNSFNFSDNI…SSRSIPINFV (106 aa)) enclose the sHSP domain.

This sequence belongs to the small heat shock protein (HSP20) family.

This Caenorhabditis elegans protein is Heat shock protein Hsp-16.48/Hsp-16.49 (hsp-16.48).